We begin with the raw amino-acid sequence, 244 residues long: Chlorosome protein I (244 aa).

One can recognise a 2Fe-2S ferredoxin-type domain in the interval 1 to 95 (MNLIINDKTA…TVKVLSRPEE (95 aa)). [2Fe-2S] cluster contacts are provided by C33, C39, C42, and C77.

[2Fe-2S] cluster is required as a cofactor.

Its subcellular location is the chlorosome. Functionally, could play a direct role in the oxidation or reduction of the quenching species formed in the chlorosome. The polypeptide is Chlorosome protein I (csmI) (Chlorobaculum tepidum (strain ATCC 49652 / DSM 12025 / NBRC 103806 / TLS) (Chlorobium tepidum)).